Here is a 433-residue protein sequence, read N- to C-terminus: tRNA-2-methylthio-N(6)-dimethylallyladenosine synthase (433 aa).

The MTTase N-terminal domain maps to 4 to 119 (KKLFIQTLGC…ITQAIKTPKF (116 aa)). Cys13, Cys50, Cys82, Cys151, Cys155, and Cys158 together coordinate [4Fe-4S] cluster. The region spanning 137–370 (RNSIYKSYIN…QNRHSEILDE (234 aa)) is the Radical SAM core domain. The TRAM domain occupies 373 to 433 (KKQENKTFKV…KRMVLYGEII (61 aa)).

This sequence belongs to the methylthiotransferase family. MiaB subfamily. As to quaternary structure, monomer. [4Fe-4S] cluster serves as cofactor.

The protein resides in the cytoplasm. The catalysed reaction is N(6)-dimethylallyladenosine(37) in tRNA + (sulfur carrier)-SH + AH2 + 2 S-adenosyl-L-methionine = 2-methylsulfanyl-N(6)-dimethylallyladenosine(37) in tRNA + (sulfur carrier)-H + 5'-deoxyadenosine + L-methionine + A + S-adenosyl-L-homocysteine + 2 H(+). Its function is as follows. Catalyzes the methylthiolation of N6-(dimethylallyl)adenosine (i(6)A), leading to the formation of 2-methylthio-N6-(dimethylallyl)adenosine (ms(2)i(6)A) at position 37 in tRNAs that read codons beginning with uridine. The sequence is that of tRNA-2-methylthio-N(6)-dimethylallyladenosine synthase from Campylobacter jejuni subsp. doylei (strain ATCC BAA-1458 / RM4099 / 269.97).